A 141-amino-acid polypeptide reads, in one-letter code: uncharacterized protein (141 aa).

This is an uncharacterized protein from Methanocaldococcus jannaschii (strain ATCC 43067 / DSM 2661 / JAL-1 / JCM 10045 / NBRC 100440) (Methanococcus jannaschii).